The chain runs to 172 residues: Odorant-binding protein (172 aa).

The N-terminal stretch at 1–15 (MVKFLLIVLALGVSC) is a signal peptide. 2 disulfides stabilise this stretch: Cys60–Cys64 and Cys79–Cys170.

It belongs to the calycin superfamily. Lipocalin family. As to quaternary structure, homodimer.

The protein resides in the secreted. This protein is found in nasal epithelium and it binds a wide variety of chemical odorants. The protein is Odorant-binding protein (Obp1f) of Rattus norvegicus (Rat).